The primary structure comprises 863 residues: Receptor-like protein Cf-9 (863 aa).

The N-terminal stretch at 1-21 is a signal peptide; it reads MDCVKLVFLMLYTFLCQLALS. Residues 22-812 lie on the Extracellular side of the membrane; it reads SSLPHLCPED…EEDSPMISWQ (791 aa). Residues 24–91 are N-cap; that stretch reads LPHLCPEDQA…GVHCDETTGQ (68 aa). N-linked (GlcNAc...) asparagine glycans are attached at residues Asn48, Asn72, Asn109, Asn127, Asn142, Asn191, Asn204, and Asn212. The LRR 1; degenerate repeat unit spans residues 92–115; the sequence is VIALDLRCSQLQGKFHSNSSLFQL. LRR repeat units follow at residues 116–139 and 141–164; these read SNLK…KFGE and SNLT…ICHL. Residues 165–191 form an LRR 4; degenerate repeat; that stretch reads SKLHVLRICDQYGLSLVPYNFELLLKN. LRR repeat units lie at residues 192–214, 215–238, 241–263, 265–287, 288–312, 314–335, 336–358, 359–382, 383–406, 408–428, 429–452, 454–476, 477–500, 502–524, 525–549, 551–572, 573–597, 599–623, 667–690, 691–714, 715–739, and 741–759; these read LTQL…SNFS, SHLT…VFHL, LQSL…KWNS, ASLM…SFSH, LTSL…LWNL, NIVF…FTIF, EKLK…LSFN, TQLE…ISGL, QNLE…IFSL, SLVE…EFKS, KTLS…LLNQ, NLQL…ICNL, KTLI…VVER, EYLS…TFSV, GNIL…MINC, YLTL…WLGY, LFQL…GNTN, FMGL…ILGN, LDSN…IIGD, LVGL…SFQN, LSVL…LASL, and FLEV…IPKG. A glycan (N-linked (GlcNAc...) asparagine) is linked at Asn262. Asn300 and Asn311 each carry an N-linked (GlcNAc...) asparagine glycan. 3 N-linked (GlcNAc...) asparagine glycosylation sites follow: Asn378, Asn396, and Asn416. Asn464 is a glycosylation site (N-linked (GlcNAc...) asparagine). A glycan (N-linked (GlcNAc...) asparagine) is linked at Asn519. N-linked (GlcNAc...) asparagine glycosylation occurs at Asn563. Residues Asn698 and Asn714 are each glycosylated (N-linked (GlcNAc...) asparagine). N-linked (GlcNAc...) asparagine glycans are attached at residues Asn746 and Asn767. Residues 760–812 form a C-cap/acidic domain region; that stretch reads KQFDSFGNTSYQGNDGLRGFPLSKLCGGEDQVTTPAELDQEEEEEDSPMISWQ. A helical transmembrane segment spans residues 813 to 833; the sequence is GVLVGYGCGLVIGLSVIYIMW. The Cytoplasmic portion of the chain corresponds to 834–863; it reads STQYPAWFSRMDLKLEHIITTKMKKHKKRY.

Belongs to the RLP family. Interacts with thioredoxin-like protein CITRX.

It localises to the cell membrane. Functionally, involved in plant defense. Confers resistance to the fungal pathogen C.fulvum through recognition of the AVR9 elicitor protein. The protein is Receptor-like protein Cf-9 of Solanum pimpinellifolium (Currant tomato).